Here is a 129-residue protein sequence, read N- to C-terminus: Large ribosomal subunit protein bL20 (129 aa).

It belongs to the bacterial ribosomal protein bL20 family.

In terms of biological role, binds directly to 23S ribosomal RNA and is necessary for the in vitro assembly process of the 50S ribosomal subunit. It is not involved in the protein synthesizing functions of that subunit. This chain is Large ribosomal subunit protein bL20, found in Mycobacterium marinum (strain ATCC BAA-535 / M).